The primary structure comprises 778 residues: Centromere/kinetochore protein zw10 homolog (778 aa).

Positions 47–99 form a coiled coil; it reads FDRLENLEDIAEMSTRNLSNLIDQTAKDSPEMLAEIKSQAQSCENLVEFLQSM.

It belongs to the ZW10 family. In terms of assembly, component of the RZZ complex composed of rod-1, czw-1 and zwl-1.

Its subcellular location is the chromosome. The protein resides in the centromere. It localises to the kinetochore. It is found in the cytoplasm. The protein localises to the cytoskeleton. Its subcellular location is the spindle. Its function is as follows. Essential component of the mitotic checkpoint, which prevents cells from prematurely exiting mitosis. Required for the assembly of the dynein-dynactin and mdf-1-mdf-2 complexes onto kinetochores. Its function related to the spindle assembly machinery and kinetochore-microtubule attachments likely depends on its association in the mitotic RZZ complex. The RZZ complex recruits the spindly-like protein spdl-1 to kinetochores. To prevent irregular chromosome segregation, the complex also inhibits the attachment of the kinetochore-associated NDC80 complex to microtubules. The recruitment of spdl-1 to kinetochores relieves this inhibition. Required for embryonic development. The polypeptide is Centromere/kinetochore protein zw10 homolog (Caenorhabditis elegans).